The chain runs to 520 residues: GMP synthase [glutamine-hydrolyzing] (520 aa).

A Glutamine amidotransferase type-1 domain is found at 13 to 205 (KIIVLDYGSQ…ALNICKAKGD (193 aa)). The Nucleophile role is filled by cysteine 90. Catalysis depends on residues histidine 179 and glutamate 181. Residues 206 to 395 (WSMDNFIDMQ…LGMPDHIVWR (190 aa)) enclose the GMPS ATP-PPase domain. Position 233-239 (233-239 (SGGVDSS)) interacts with ATP.

In terms of assembly, homodimer.

It catalyses the reaction XMP + L-glutamine + ATP + H2O = GMP + L-glutamate + AMP + diphosphate + 2 H(+). It participates in purine metabolism; GMP biosynthesis; GMP from XMP (L-Gln route): step 1/1. Catalyzes the synthesis of GMP from XMP. This chain is GMP synthase [glutamine-hydrolyzing], found in Streptococcus pneumoniae (strain CGSP14).